The sequence spans 326 residues: N-acetyl-gamma-glutamyl-phosphate reductase (326 aa).

Cys155 is an active-site residue.

The protein belongs to the NAGSA dehydrogenase family. Type 1 subfamily.

It is found in the cytoplasm. It catalyses the reaction N-acetyl-L-glutamate 5-semialdehyde + phosphate + NADP(+) = N-acetyl-L-glutamyl 5-phosphate + NADPH + H(+). It functions in the pathway amino-acid biosynthesis; L-arginine biosynthesis; N(2)-acetyl-L-ornithine from L-glutamate: step 3/4. In terms of biological role, catalyzes the NADPH-dependent reduction of N-acetyl-5-glutamyl phosphate to yield N-acetyl-L-glutamate 5-semialdehyde. The polypeptide is N-acetyl-gamma-glutamyl-phosphate reductase (Shewanella sediminis (strain HAW-EB3)).